A 378-amino-acid chain; its full sequence is Dual-specificity RNA methyltransferase RlmN (378 aa).

Residue glutamate 96 is the Proton acceptor of the active site. Residues 102–340 (DNGRGTLCVS…ATVRTTRGDD (239 aa)) enclose the Radical SAM core domain. An intrachain disulfide couples cysteine 109 to cysteine 345. Positions 116, 120, and 123 each coordinate [4Fe-4S] cluster. Residues 170–171 (GE), serine 202, 224–226 (SLH), and asparagine 302 contribute to the S-adenosyl-L-methionine site. The active-site S-methylcysteine intermediate is the cysteine 345.

It belongs to the radical SAM superfamily. RlmN family. The cofactor is [4Fe-4S] cluster.

The protein resides in the cytoplasm. The enzyme catalyses adenosine(2503) in 23S rRNA + 2 reduced [2Fe-2S]-[ferredoxin] + 2 S-adenosyl-L-methionine = 2-methyladenosine(2503) in 23S rRNA + 5'-deoxyadenosine + L-methionine + 2 oxidized [2Fe-2S]-[ferredoxin] + S-adenosyl-L-homocysteine. It catalyses the reaction adenosine(37) in tRNA + 2 reduced [2Fe-2S]-[ferredoxin] + 2 S-adenosyl-L-methionine = 2-methyladenosine(37) in tRNA + 5'-deoxyadenosine + L-methionine + 2 oxidized [2Fe-2S]-[ferredoxin] + S-adenosyl-L-homocysteine. In terms of biological role, specifically methylates position 2 of adenine 2503 in 23S rRNA and position 2 of adenine 37 in tRNAs. m2A2503 modification seems to play a crucial role in the proofreading step occurring at the peptidyl transferase center and thus would serve to optimize ribosomal fidelity. This Hahella chejuensis (strain KCTC 2396) protein is Dual-specificity RNA methyltransferase RlmN.